Consider the following 321-residue polypeptide: Polygalacturonan/rhamnogalacturonan transport system permease protein YteP (321 aa).

One can recognise an ABC transmembrane type-1 domain in the interval 1-144 (MKTAEAQAPA…YIPHFMSWVI (144 aa)). A run of 3 helical transmembrane segments spans residues 21–41 (RKRL…ILPG), 63–83 (YQPF…FIRL), and 123–143 (IALF…MSWV).

The protein belongs to the binding-protein-dependent transport system permease family. As to quaternary structure, the complex is probably composed of two ATP-binding proteins (MsmX), two transmembrane proteins (YtcP and YteP) and a solute-binding protein (YtcQ).

The protein resides in the cell membrane. Its function is as follows. Involved in pectin degradation. Part of the ABC transporter complex YtcQP-YteP involved in the uptake of polygalacturonan and rhamnogalacturonan type I. Responsible for the translocation of the substrate across the membrane. The chain is Polygalacturonan/rhamnogalacturonan transport system permease protein YteP (yteP) from Bacillus subtilis (strain 168).